We begin with the raw amino-acid sequence, 769 residues long: MPASWTSPQKSSALAPDDHGSSYEGSVSFRDVVINFSREEWQHLDLSQRNLYRDVMLETYSHLLSVGYQVPKPEVVMLEQGKEPWALQGERPRHSCPGEKLWDHNQHRKIIGYKPASSQDQKIYSGEKSYECAEFGKSFTWKSQFKVHLKVPTGEKLYVCIECGRAFVQKPEFITHQKAHMREKPYKCNECGKSVFQVSSLFRHQRIHTGEKLYQCSECGKGFPYNSDLSIHEKIHTGERHHECTDCGKAFTQRSTLKMHQKIHTGERSYICIECGQAFIQKTQLIAHRRIHSGEKPYECNNCGKSFISKSQLEVHQRIHTRLKPYICTEYGKVFSNNSNLITHEKVQSREKSSICTECGKAFTYRSELIIHQRIHTGEKPYACSDCGKAFTQKSTLTVHQRIHTGEKSYVCMKCGLAFIRKAHLVTHQIIHTGEKPYKCGHCGKLFTSKSQLHVHKRIHTGEKPYVCNKCGKAFTNRSDLITHQKTHTGEKSYICSKCGKAFTQRSDLITHQRIHTGEKPYECNTCGKAFTQKSNLNIHQKIHTGERQYECHECGKAFNQKSILIVHQKIHTGEKPYVCTECGRAFIRKSNFITHQRIHTGEKPYECSDCGKSFTSKSQLLVHQPLHTGEKPYVCAECGKAFSGRSNLSKHQKTHTGEKPYICSECGKTFRQKSELITHHRIHTGEKPYECSDCGKSFTKKSQLQVHQRIHTGEKPYVCAECGKAFSNRSNLNKHQTTHTGDKPYKCGICGKGFVQKSVFSVHQGSHA.

Residues 1–12 (MPASWTSPQKSS) show a composition bias toward polar residues. A disordered region spans residues 1-23 (MPASWTSPQKSSALAPDDHGSSY). The KRAB domain maps to 27–97 (VSFRDVVINF…QGERPRHSCP (71 aa)). 21 C2H2-type zinc fingers span residues 158–180 (YVCI…QKAH), 186–208 (YKCN…QRIH), 214–236 (YQCS…EKIH), 242–264 (HECT…QKIH), 270–292 (YICI…RRIH), 298–320 (YECN…QRIH), 354–376 (SICT…QRIH), 382–404 (YACS…QRIH), 410–432 (YVCM…QIIH), 438–460 (YKCG…KRIH), 466–488 (YVCN…QKTH), 494–516 (YICS…QRIH), 522–544 (YECN…QKIH), 550–572 (YECH…QKIH), 578–600 (YVCT…QRIH), 606–628 (YECS…QPLH), 634–656 (YVCA…QKTH), 662–684 (YICS…HRIH), 690–712 (YECS…QRIH), 718–740 (YVCA…QTTH), and 746–768 (YKCG…QGSH).

It belongs to the krueppel C2H2-type zinc-finger protein family.

Its subcellular location is the nucleus. Functionally, may be involved in transcriptional regulation. The chain is Zinc finger protein 585B (ZNF585B) from Pongo abelii (Sumatran orangutan).